Reading from the N-terminus, the 682-residue chain is Zinc finger protein 16 (682 aa).

Basic and acidic residues predominate over residues 1–10 (MPSLRTRREE). The tract at residues 1–43 (MPSLRTRREEAEMELSVPGPSPWTPAAQARVRDAPAVTHPGSA) is disordered. Positions 62 to 210 (YQQPDCDTRT…GVPTAESPLI (149 aa)) are necessary for transcription activation. A C2H2-type 1; degenerate zinc finger spans residues 209–231 (LICNECGKTFQGNPDLIQRQIVH). Residues 237–259 (FMCDDCGKTFSQNSVLKNRHRSH) form a C2H2-type 2; degenerate zinc finger. A Glycyl lysine isopeptide (Lys-Gly) (interchain with G-Cter in SUMO2) cross-link involves residue Lys-253. 8 C2H2-type zinc fingers span residues 265 to 287 (YQCS…QSHH), 293 to 315 (YMCN…QKSH), 321 to 343 (YECN…QRIH), 349 to 371 (YVCS…HRTH), 377 to 399 (FECG…QRVH), 405 to 427 (YECN…HRVH), 433 to 455 (YKCS…RRIH), and 461 to 483 (HVCN…QIIH). 2 required for nuclear localization regions span residues 268–393 (SECG…AHLR) and 341–373 (RIHS…THTG). The required for nuclear localization stretch occupies residues 473 to 503 (SSVLRKHQIIHTGEKPYRCSVCGKAFSHSSA). Lys-487 is subject to N6-acetyllysine. C2H2-type zinc fingers lie at residues 489 to 511 (YRCS…QGVH), 517 to 539 (YACH…QRVH), 545 to 567 (YECT…QRIH), 573 to 595 (HECN…QKVH), 601 to 623 (YTCV…QIIH), 629 to 651 (YKCS…QRIH), and 657 to 679 (YDCA…QLIH).

Belongs to the krueppel C2H2-type zinc-finger protein family. In terms of assembly, interacts with INCA1; the interaction inhibits INCA1 activity and induces the cell cycle process. As to expression, ubiquitous.

The protein resides in the nucleus. Functionally, acts as a transcriptional activator. Promotes cell proliferation by facilitating the cell cycle phase transition from the S to G2/M phase. Involved in both the hemin- and phorbol myristate acetate (PMA)-induced erythroid and megakaryocytic differentiation, respectively. Also plays a role as an inhibitor of cell apoptosis. The polypeptide is Zinc finger protein 16 (ZNF16) (Homo sapiens (Human)).